A 274-amino-acid polypeptide reads, in one-letter code: 2,3,4,5-tetrahydropyridine-2,6-dicarboxylate N-succinyltransferase (274 aa).

The substrate site is built by arginine 106 and aspartate 143.

This sequence belongs to the transferase hexapeptide repeat family. Homotrimer.

The protein localises to the cytoplasm. The enzyme catalyses (S)-2,3,4,5-tetrahydrodipicolinate + succinyl-CoA + H2O = (S)-2-succinylamino-6-oxoheptanedioate + CoA. It participates in amino-acid biosynthesis; L-lysine biosynthesis via DAP pathway; LL-2,6-diaminopimelate from (S)-tetrahydrodipicolinate (succinylase route): step 1/3. This chain is 2,3,4,5-tetrahydropyridine-2,6-dicarboxylate N-succinyltransferase, found in Cupriavidus metallidurans (strain ATCC 43123 / DSM 2839 / NBRC 102507 / CH34) (Ralstonia metallidurans).